The following is a 1378-amino-acid chain: Hybrid signal transduction histidine kinase H (1378 aa).

Positions 212 to 242 (KEKFKKEELINDFKSRLETLENKIDQRVDER) form a coiled coil. The region spanning 243–314 (IETRFKYVLE…NNNNNNNNNN (72 aa)) is the PAS domain. Residues 294-337 (YQQHNNNNNNNNNNNNNNNNNNNNNSNNKSPIINSPNTTSPTNT) are disordered. A compositionally biased stretch (low complexity) spans 298 to 337 (NNNNNNNNNNNNNNNNNNNNNSNNKSPIINSPNTTSPTNT). Positions 498-805 (TMSHEMRTPL…SFHFLVEVFF (308 aa)) constitute a Histidine kinase domain. His501 is subject to Phosphohistidine; by autocatalysis. The segment covering 663–696 (NNSNNSNNNHNHNNNNNNNNHLNCSGSFNNNGFN) has biased composition (low complexity). Disordered stretches follow at residues 663 to 717 (NNSN…DKHC), 905 to 924 (TNNN…STTT), and 1103 to 1213 (NNSN…HPNP). Residues 697–714 (HGHHHHHHHHHHHHHHHD) show a composition bias toward basic residues. 2 stretches are compositionally biased toward low complexity: residues 1103-1119 (NNSN…SGSS) and 1136-1187 (SPSL…NNNN). Over residues 1188-1206 (LNHYNSDSILSSDLSPQQH) the composition is skewed to polar residues. Residues 1244 to 1364 (KIMVAEDSLV…ILAVELKRAW (121 aa)) form the Response regulatory domain. Position 1297 is a 4-aspartylphosphate (Asp1297).

Activation probably requires transfer of a phosphate group between a histidine in the kinase core (transmitter) domain and an aspartate of the receiver domain.

The catalysed reaction is ATP + protein L-histidine = ADP + protein N-phospho-L-histidine.. Acts as a receptor histidine kinase for a signal transduction pathway. This protein undergoes an ATP-dependent autophosphorylation at a conserved histidine residue in the kinase core, and a phosphoryl group is then transferred to a conserved aspartate residue in the receiver domain. This Dictyostelium discoideum (Social amoeba) protein is Hybrid signal transduction histidine kinase H (dhkH).